The following is a 252-amino-acid chain: uncharacterized protein (252 aa).

Position 16–40 (16–40) interacts with NADP(+); sequence LVTGASDGIGREAAMTYARYGATVI. Serine 152 is a binding site for substrate. Tyrosine 165 (proton acceptor) is an active-site residue.

This sequence belongs to the short-chain dehydrogenases/reductases (SDR) family.

This is an uncharacterized protein from Escherichia coli (strain K12).